A 108-amino-acid chain; its full sequence is Nucleoid-associated protein Csal_1459 (108 aa).

Positions 84-93 are enriched in basic and acidic residues; it reads EETSRGRMEE. Residues 84 to 108 are disordered; sequence EETSRGRMEEATEGMNLPPGFKMPF.

It belongs to the YbaB/EbfC family. Homodimer.

The protein localises to the cytoplasm. It localises to the nucleoid. Its function is as follows. Binds to DNA and alters its conformation. May be involved in regulation of gene expression, nucleoid organization and DNA protection. The polypeptide is Nucleoid-associated protein Csal_1459 (Chromohalobacter salexigens (strain ATCC BAA-138 / DSM 3043 / CIP 106854 / NCIMB 13768 / 1H11)).